The following is a 311-amino-acid chain: Lipoyl synthase (311 aa).

Positions 47, 52, 58, 73, 77, 80, and 287 each coordinate [4Fe-4S] cluster. The 218-residue stretch at 59 to 276 (WTKKHATVMI…AQIARAKGFL (218 aa)) folds into the Radical SAM core domain.

This sequence belongs to the radical SAM superfamily. Lipoyl synthase family. [4Fe-4S] cluster serves as cofactor.

Its subcellular location is the cytoplasm. The enzyme catalyses [[Fe-S] cluster scaffold protein carrying a second [4Fe-4S](2+) cluster] + N(6)-octanoyl-L-lysyl-[protein] + 2 oxidized [2Fe-2S]-[ferredoxin] + 2 S-adenosyl-L-methionine + 4 H(+) = [[Fe-S] cluster scaffold protein] + N(6)-[(R)-dihydrolipoyl]-L-lysyl-[protein] + 4 Fe(3+) + 2 hydrogen sulfide + 2 5'-deoxyadenosine + 2 L-methionine + 2 reduced [2Fe-2S]-[ferredoxin]. It functions in the pathway protein modification; protein lipoylation via endogenous pathway; protein N(6)-(lipoyl)lysine from octanoyl-[acyl-carrier-protein]: step 2/2. Functionally, catalyzes the radical-mediated insertion of two sulfur atoms into the C-6 and C-8 positions of the octanoyl moiety bound to the lipoyl domains of lipoate-dependent enzymes, thereby converting the octanoylated domains into lipoylated derivatives. In Sphingopyxis alaskensis (strain DSM 13593 / LMG 18877 / RB2256) (Sphingomonas alaskensis), this protein is Lipoyl synthase.